A 76-amino-acid polypeptide reads, in one-letter code: Small ribosomal subunit protein bS18 (76 aa).

Belongs to the bacterial ribosomal protein bS18 family. As to quaternary structure, part of the 30S ribosomal subunit. Forms a tight heterodimer with protein bS6.

Functionally, binds as a heterodimer with protein bS6 to the central domain of the 16S rRNA, where it helps stabilize the platform of the 30S subunit. This chain is Small ribosomal subunit protein bS18, found in Neisseria gonorrhoeae (strain ATCC 700825 / FA 1090).